The chain runs to 43 residues: Potassium channel toxin gamma-KTx 4.5 (43 aa).

Cystine bridges form between C5–C23, C11–C34, C20–C39, and C24–C41.

This sequence belongs to the ergtoxin family. Gamma-KTx 4 subfamily. In terms of tissue distribution, expressed by the venom gland.

The protein localises to the secreted. Its function is as follows. Reversibly blocks Kv11/ERG potassium channels. The protein is Potassium channel toxin gamma-KTx 4.5 of Centruroides exilicauda (Bark scorpion).